The primary structure comprises 101 residues: Small ribosomal subunit protein uS14 (101 aa).

This sequence belongs to the universal ribosomal protein uS14 family. Part of the 30S ribosomal subunit. Contacts proteins S3 and S10.

Functionally, binds 16S rRNA, required for the assembly of 30S particles and may also be responsible for determining the conformation of the 16S rRNA at the A site. This chain is Small ribosomal subunit protein uS14, found in Burkholderia ambifaria (strain MC40-6).